Here is a 161-residue protein sequence, read N- to C-terminus: MSQLTHINAAGEAHMVDVSAKAETVREARAEAYVTMRQDTLAMIIDGKHPKGDVFATARIAGIQAAKSTWQLIPLCHPLLLSKVEVTLSVEPVHSRVRIETCCRLCGKTGVEMEALSAASVAALTIYDMCKAVQKDMVIGPVRLLAKSGGKSGDFHAGEVQ.

Substrate contacts are provided by residues 75–77 and 113–114; these read LCH and ME. Aspartate 128 is an active-site residue.

It belongs to the MoaC family. Homohexamer; trimer of dimers.

The enzyme catalyses (8S)-3',8-cyclo-7,8-dihydroguanosine 5'-triphosphate = cyclic pyranopterin phosphate + diphosphate. It functions in the pathway cofactor biosynthesis; molybdopterin biosynthesis. Functionally, catalyzes the conversion of (8S)-3',8-cyclo-7,8-dihydroguanosine 5'-triphosphate to cyclic pyranopterin monophosphate (cPMP). The protein is Cyclic pyranopterin monophosphate synthase of Edwardsiella ictaluri (strain 93-146).